We begin with the raw amino-acid sequence, 238 residues long: Dof zinc finger protein MNB1A (238 aa).

Residues 1–13 (MQEASSAAAAGAE) show a composition bias toward low complexity. The disordered stretch occupies residues 1–48 (MQEASSAAAAGAEPGRRAAQHQFAGVDLRRPKGYAAPAPAPAVGEGDP). The segment at 47-101 (DPCPRCASRDTKFCYYNNYNTSQPRHFCKGCRRYWTKGGTLRNVPVGGGTRKKPS) adopts a Dof-type zinc-finger fold. The Zn(2+) site is built by cysteine 49, cysteine 52, cysteine 74, and cysteine 77. The interval 85-155 (GTLRNVPVGG…TATTTTTTSE (71 aa)) is disordered. Residues 119–130 (PKKKPASKKRRV) are compositionally biased toward basic residues. Residues 138 to 155 (ATAADPGKTATTTTTTSE) show a composition bias toward low complexity.

In terms of tissue distribution, expressed in all tissues examined.

Its subcellular location is the nucleus. Its function is as follows. Transcription factor that binds specifically to a 5'-AA[AG]G-3' consensus core sequence at the MNF1-binding site. In Zea mays (Maize), this protein is Dof zinc finger protein MNB1A (MNB1A).